Consider the following 283-residue polypeptide: Acetylglutamate kinase (283 aa).

Residues 64 to 65 (GG), Arg86, and Asn181 contribute to the substrate site.

The protein belongs to the acetylglutamate kinase family. ArgB subfamily.

Its subcellular location is the cytoplasm. The catalysed reaction is N-acetyl-L-glutamate + ATP = N-acetyl-L-glutamyl 5-phosphate + ADP. It functions in the pathway amino-acid biosynthesis; L-arginine biosynthesis; N(2)-acetyl-L-ornithine from L-glutamate: step 2/4. Its function is as follows. Catalyzes the ATP-dependent phosphorylation of N-acetyl-L-glutamate. This Sulfurovum sp. (strain NBC37-1) protein is Acetylglutamate kinase.